We begin with the raw amino-acid sequence, 97 residues long: Acylphosphatase (97 aa).

The Acylphosphatase-like domain maps to 5–92; the sequence is RAHVWISGRV…GEFVRFEITF (88 aa). Residues R20 and N38 contribute to the active site.

This sequence belongs to the acylphosphatase family.

The catalysed reaction is an acyl phosphate + H2O = a carboxylate + phosphate + H(+). The protein is Acylphosphatase (acyP) of Syntrophobacter fumaroxidans (strain DSM 10017 / MPOB).